The primary structure comprises 152 residues: Aspartate carbamoyltransferase regulatory chain (152 aa).

Zn(2+) is bound by residues cysteine 108, cysteine 113, cysteine 137, and cysteine 140.

It belongs to the PyrI family. Contains catalytic and regulatory chains. It depends on Zn(2+) as a cofactor.

Functionally, involved in allosteric regulation of aspartate carbamoyltransferase. The chain is Aspartate carbamoyltransferase regulatory chain from Neisseria gonorrhoeae (strain ATCC 700825 / FA 1090).